Here is a 197-residue protein sequence, read N- to C-terminus: MSSKEQKTPDGQAPEEIVTEQHEEVESVESAESAEQVDPRDEEIARLQSELTQAQNRERDTVLRMKAEMENLRRRTEQDIEKAHKFALEKFINELLPVIDSLDRALEVANKENQDMAAMVEGIELTLKSMLDVVRKFGVEVIADTNVPLDPNVHQAIAMVESEDVAPNHVLAVMQKGYTLNGRTIRAAMVTVAKAKA.

The tract at residues 1-43 is disordered; sequence MSSKEQKTPDGQAPEEIVTEQHEEVESVESAESAEQVDPRDEE.

The protein belongs to the GrpE family. Homodimer.

Its subcellular location is the cytoplasm. Participates actively in the response to hyperosmotic and heat shock by preventing the aggregation of stress-denatured proteins, in association with DnaK and GrpE. It is the nucleotide exchange factor for DnaK and may function as a thermosensor. Unfolded proteins bind initially to DnaJ; upon interaction with the DnaJ-bound protein, DnaK hydrolyzes its bound ATP, resulting in the formation of a stable complex. GrpE releases ADP from DnaK; ATP binding to DnaK triggers the release of the substrate protein, thus completing the reaction cycle. Several rounds of ATP-dependent interactions between DnaJ, DnaK and GrpE are required for fully efficient folding. This is Protein GrpE from Cronobacter sakazakii (strain ATCC BAA-894) (Enterobacter sakazakii).